The primary structure comprises 381 residues: L-lactate dehydrogenase (381 aa).

One can recognise an FMN hydroxy acid dehydrogenase domain in the interval 1–380; sequence MIISASTDYR…SADSLVRELG (380 aa). Substrate is bound at residue Y24. FMN contacts are provided by S106 and Q127. A substrate-binding site is contributed by Y129. FMN is bound at residue T155. R164 is a substrate binding site. K251 serves as a coordination point for FMN. Residue H275 is the Proton acceptor of the active site. R278 serves as a coordination point for substrate. 306 to 330 lines the FMN pocket; it reads DSGIRTGLDVVRMIALGADSVLLGR.

The protein belongs to the FMN-dependent alpha-hydroxy acid dehydrogenase family. In terms of assembly, homotetramer. FMN is required as a cofactor.

Its subcellular location is the cell inner membrane. The enzyme catalyses (S)-lactate + A = pyruvate + AH2. Functionally, catalyzes the conversion of L-lactate to pyruvate. Is coupled to the respiratory chain. In Pseudomonas aeruginosa (strain UCBPP-PA14), this protein is L-lactate dehydrogenase.